A 60-amino-acid chain; its full sequence is Cytochrome c oxidase subunit 9, mitochondrial (60 aa).

The Mitochondrial matrix portion of the chain corresponds to methionine 1–isoleucine 15. A helical transmembrane segment spans residues isoleucine 16–histidine 38. The Mitochondrial intermembrane portion of the chain corresponds to lysine 39–lysine 57. The propeptide at alanine 58–asparagine 60 is removed in mature form.

It belongs to the fungal cytochrome c oxidase subunit 7a family. Component of the cytochrome c oxidase (complex IV, CIV), a multisubunit enzyme composed of a catalytic core of 3 subunits and several supernumerary subunits. The complex exists as a monomer or a dimer and forms supercomplexes (SCs) in the inner mitochondrial membrane with ubiquinol-cytochrome c oxidoreductase (cytochrome b-c1 complex, complex III, CIII).

The protein resides in the mitochondrion inner membrane. Its pathway is energy metabolism; oxidative phosphorylation. In terms of biological role, component of the cytochrome c oxidase, the last enzyme in the mitochondrial electron transport chain which drives oxidative phosphorylation. The respiratory chain contains 3 multisubunit complexes succinate dehydrogenase (complex II, CII), ubiquinol-cytochrome c oxidoreductase (cytochrome b-c1 complex, complex III, CIII) and cytochrome c oxidase (complex IV, CIV), that cooperate to transfer electrons derived from NADH and succinate to molecular oxygen, creating an electrochemical gradient over the inner membrane that drives transmembrane transport and the ATP synthase. Cytochrome c oxidase is the component of the respiratory chain that catalyzes the reduction of oxygen to water. Electrons originating from reduced cytochrome c in the intermembrane space (IMS) are transferred via the dinuclear copper A center (CU(A)) of subunit 2 and heme A of subunit 1 to the active site in subunit 1, a binuclear center (BNC) formed by heme A3 and copper B (CU(B)). The BNC reduces molecular oxygen to 2 water molecules using 4 electrons from cytochrome c in the IMS and 4 protons from the mitochondrial matrix. This is Cytochrome c oxidase subunit 9, mitochondrial (COX9) from Candida glabrata (strain ATCC 2001 / BCRC 20586 / JCM 3761 / NBRC 0622 / NRRL Y-65 / CBS 138) (Yeast).